A 179-amino-acid polypeptide reads, in one-letter code: NAD(P)H-quinone oxidoreductase subunit 6, chloroplastic (179 aa).

5 helical membrane passes run 8–28 (ITLFVLDFFIFVGALGVVFFN), 30–50 (IIYSALFLGLTFLSVALLYLL), 58–78 (VAQVIIYVGAINVLIVFAIML), 98–118 (SFCVNFILFSTIVTMIVTTPW), and 150–170 (VLPFELLSLLLLIALIGAVII).

The protein belongs to the complex I subunit 6 family. As to quaternary structure, NDH is composed of at least 16 different subunits, 5 of which are encoded in the nucleus.

The protein resides in the plastid. It localises to the chloroplast thylakoid membrane. The enzyme catalyses a plastoquinone + NADH + (n+1) H(+)(in) = a plastoquinol + NAD(+) + n H(+)(out). The catalysed reaction is a plastoquinone + NADPH + (n+1) H(+)(in) = a plastoquinol + NADP(+) + n H(+)(out). Functionally, NDH shuttles electrons from NAD(P)H:plastoquinone, via FMN and iron-sulfur (Fe-S) centers, to quinones in the photosynthetic chain and possibly in a chloroplast respiratory chain. The immediate electron acceptor for the enzyme in this species is believed to be plastoquinone. Couples the redox reaction to proton translocation, and thus conserves the redox energy in a proton gradient. The chain is NAD(P)H-quinone oxidoreductase subunit 6, chloroplastic (ndhG) from Chaetosphaeridium globosum (Charophycean green alga).